The sequence spans 201 residues: MSKVLVLKSSILAGYSQSGQLTDYFIEQWREKHVADEITVRDLAAPPVPVLDGELVGAMRPGDAPLTPRQQDALALSDELIAELKAHDVIVIAAPMYNFNIPTQLKNYFDLIARAGITFRYTEKGPEGLVTGKRAVVLSSRGGIHKDTPTDLIAPYLKVFLGFIGITDVNFVFAEGIAYGPEVAAKAQADAKAAIDSVVAA.

Residues Ser-10, 16–18 (SQS), 96–99 (MYNF), and 140–143 (SRGG) contribute to the FMN site.

This sequence belongs to the azoreductase type 1 family. Homodimer. FMN serves as cofactor.

It catalyses the reaction 2 a quinone + NADH + H(+) = 2 a 1,4-benzosemiquinone + NAD(+). The catalysed reaction is N,N-dimethyl-1,4-phenylenediamine + anthranilate + 2 NAD(+) = 2-(4-dimethylaminophenyl)diazenylbenzoate + 2 NADH + 2 H(+). In terms of biological role, quinone reductase that provides resistance to thiol-specific stress caused by electrophilic quinones. Its function is as follows. Also exhibits azoreductase activity. Catalyzes the reductive cleavage of the azo bond in aromatic azo compounds to the corresponding amines. The polypeptide is FMN-dependent NADH:quinone oxidoreductase (Salmonella choleraesuis (strain SC-B67)).